Here is a 213-residue protein sequence, read N- to C-terminus: Orotate phosphoribosyltransferase (213 aa).

K26 lines the 5-phospho-alpha-D-ribose 1-diphosphate pocket. An orotate-binding site is contributed by F34 to F35. Residues Y72–K73, R99, K100, K103, H105, and D124–A132 contribute to the 5-phospho-alpha-D-ribose 1-diphosphate site. Orotate contacts are provided by T128 and R156.

The protein belongs to the purine/pyrimidine phosphoribosyltransferase family. PyrE subfamily. Homodimer. It depends on Mg(2+) as a cofactor.

The catalysed reaction is orotidine 5'-phosphate + diphosphate = orotate + 5-phospho-alpha-D-ribose 1-diphosphate. It participates in pyrimidine metabolism; UMP biosynthesis via de novo pathway; UMP from orotate: step 1/2. Its function is as follows. Catalyzes the transfer of a ribosyl phosphate group from 5-phosphoribose 1-diphosphate to orotate, leading to the formation of orotidine monophosphate (OMP). In Haemophilus ducreyi (strain 35000HP / ATCC 700724), this protein is Orotate phosphoribosyltransferase.